We begin with the raw amino-acid sequence, 215 residues long: Histone-like protein 18C (215 aa).

The disordered stretch occupies residues 140–215 (CTPRKENKCS…PKSSKPKCSM (76 aa)). Composition is skewed to basic residues over residues 149-190 (SKPR…RPRK) and 197-215 (AKAK…KCSM).

Its function is as follows. Not known. Encoded in the intron of cAMP-dependent protein kinase regulatory chain type I. The polypeptide is Histone-like protein 18C (Mst77F) (Drosophila melanogaster (Fruit fly)).